We begin with the raw amino-acid sequence, 237 residues long: Ribosomal RNA small subunit methyltransferase G (237 aa).

S-adenosyl-L-methionine-binding positions include Gly78, Phe83, Ala129 to Glu130, and Arg148.

Belongs to the methyltransferase superfamily. RNA methyltransferase RsmG family.

It is found in the cytoplasm. Its function is as follows. Specifically methylates the N7 position of a guanine in 16S rRNA. The protein is Ribosomal RNA small subunit methyltransferase G of Clostridium kluyveri (strain ATCC 8527 / DSM 555 / NBRC 12016 / NCIMB 10680 / K1).